We begin with the raw amino-acid sequence, 479 residues long: Cardiolipin synthase A (479 aa).

The next 2 membrane-spanning stretches (helical) occupy residues 8–28 (LLAYFIATLHFLGTLAAIHAV) and 38–58 (IAWALSLMFMPYLTLIPYLIF). PLD phosphodiesterase domains lie at 218 to 245 (VNFRNHRKIVVVDGITGFVGGHNVGDEY) and 392 to 419 (TPGFLHQKVVLVDSEISAIGSANMDNRS). Residues His223, Lys225, Asp230, His397, Lys399, and Asp404 contribute to the active site.

It belongs to the phospholipase D family. Cardiolipin synthase subfamily. ClsA sub-subfamily.

The protein resides in the cell inner membrane. The enzyme catalyses 2 a 1,2-diacyl-sn-glycero-3-phospho-(1'-sn-glycerol) = a cardiolipin + glycerol. Its function is as follows. Catalyzes the reversible phosphatidyl group transfer from one phosphatidylglycerol molecule to another to form cardiolipin (CL) (diphosphatidylglycerol) and glycerol. This is Cardiolipin synthase A from Pseudomonas fluorescens (strain SBW25).